The primary structure comprises 953 residues: GATA zinc finger domain-containing protein 14 (953 aa).

Residues 1 to 21 (MFEKIPNQNSHSMGDNNTGYY) are compositionally biased toward polar residues. 2 disordered regions span residues 1 to 109 (MFEK…SPNR) and 216 to 756 (TYGS…TQPQ). Over residues 22–89 (NNNNNNNNNN…QLPSPQLSQP (68 aa)) the composition is skewed to low complexity. Residues 90-109 (NSMNTTPNQTSPNLRSSPNR) show a composition bias toward polar residues. 3 stretches are compositionally biased toward low complexity: residues 219–330 (SSNT…VNAN), 342–683 (NIYN…PNSS), and 690–756 (GNNG…TQPQ). The GATA-type zinc-finger motif lies at 893 to 918 (CTSCGTTQTPEWRKGPAGGKSLCNAC). The segment at 934 to 953 (KVETTSSPPSTSMNVVNLLN) is disordered.

This is GATA zinc finger domain-containing protein 14 (gtaN) from Dictyostelium discoideum (Social amoeba).